The following is a 288-amino-acid chain: UTP--glucose-1-phosphate uridylyltransferase (288 aa).

It belongs to the UDPGP type 2 family.

It carries out the reaction alpha-D-glucose 1-phosphate + UTP + H(+) = UDP-alpha-D-glucose + diphosphate. It participates in glycolipid metabolism; diglucosyl-diacylglycerol biosynthesis. Its function is as follows. Catalyzes the formation of UDP-glucose from glucose-1-phosphate and UTP. This is an intermediate step in the biosynthesis of diglucosyl-diacylglycerol (Glc2-DAG), i.e. a glycolipid found in the membrane, which is also used as a membrane anchor for lipoteichoic acid (LTA). The protein is UTP--glucose-1-phosphate uridylyltransferase (gtaB) of Staphylococcus haemolyticus (strain JCSC1435).